Here is a 1156-residue protein sequence, read N- to C-terminus: DNA-directed RNA polymerase 133 kDa polypeptide (1156 aa).

Belongs to the RNA polymerase beta chain family. The DNA-dependent RNA polymerase used for intermediate and late genes expression consists of eight subunits 147 kDa, 133 kDa, 35 kDa, 30 kDa, 22 kDa, 19 kDa, 18 kDa and 7 kDa totalling more than 500 kDa in mass. The same holoenzyme, with the addition of the transcription-specificity factor RAP94, is used for early gene expression.

It localises to the virion. It catalyses the reaction RNA(n) + a ribonucleoside 5'-triphosphate = RNA(n+1) + diphosphate. Functionally, part of the DNA-dependent RNA polymerase which catalyzes the transcription of viral DNA into RNA using the four ribonucleoside triphosphates as substrates. Responsible for the transcription of early, intermediate and late genes. DNA-dependent RNA polymerase associates with the early transcription factor (ETF), itself composed of D6 and A7, thereby allowing the early genes transcription. Late transcription, and probably also intermediate transcription, require newly synthesized RNA polymerase. The chain is DNA-directed RNA polymerase 133 kDa polypeptide (RPO132) from Homo sapiens (Human).